We begin with the raw amino-acid sequence, 438 residues long: 3-phosphoshikimate 1-carboxyvinyltransferase (438 aa).

Positions 26, 27, and 31 each coordinate 3-phosphoshikimate. K26 serves as a coordination point for phosphoenolpyruvate. The phosphoenolpyruvate site is built by G99 and R127. Residues S172, Q174, D320, and K347 each contribute to the 3-phosphoshikimate site. Q174 contributes to the phosphoenolpyruvate binding site. D320 functions as the Proton acceptor in the catalytic mechanism. Residues R351 and R392 each contribute to the phosphoenolpyruvate site.

Belongs to the EPSP synthase family. In terms of assembly, monomer.

The protein resides in the cytoplasm. The enzyme catalyses 3-phosphoshikimate + phosphoenolpyruvate = 5-O-(1-carboxyvinyl)-3-phosphoshikimate + phosphate. It functions in the pathway metabolic intermediate biosynthesis; chorismate biosynthesis; chorismate from D-erythrose 4-phosphate and phosphoenolpyruvate: step 6/7. Functionally, catalyzes the transfer of the enolpyruvyl moiety of phosphoenolpyruvate (PEP) to the 5-hydroxyl of shikimate-3-phosphate (S3P) to produce enolpyruvyl shikimate-3-phosphate and inorganic phosphate. This is 3-phosphoshikimate 1-carboxyvinyltransferase from Xanthomonas campestris pv. campestris (strain B100).